We begin with the raw amino-acid sequence, 460 residues long: 7-cyano-7-deazaguanine synthase 2 (460 aa).

The active-site For GATase activity is cysteine 2. Positions cysteine 2–asparagine 225 constitute a Glutamine amidotransferase type-2 domain. Alanine 245 to alanine 255 serves as a coordination point for ATP. 4 residues coordinate Zn(2+): cysteine 426, cysteine 434, cysteine 437, and cysteine 440.

The protein belongs to the QueC family. It depends on Zn(2+) as a cofactor.

It carries out the reaction 7-carboxy-7-deazaguanine + NH4(+) + ATP = 7-cyano-7-deazaguanine + ADP + phosphate + H2O + H(+). The protein operates within purine metabolism; 7-cyano-7-deazaguanine biosynthesis. Catalyzes the ATP-dependent conversion of 7-carboxy-7-deazaguanine (CDG) to 7-cyano-7-deazaguanine (preQ(0)). The chain is 7-cyano-7-deazaguanine synthase 2 (queC2) from Sulfurisphaera tokodaii (strain DSM 16993 / JCM 10545 / NBRC 100140 / 7) (Sulfolobus tokodaii).